The sequence spans 90 residues: MMTRVFFAMFFLMALTEGWPRLYDSDCVRGRNMHITCFKDQTCGLTVKRNGRLNCSLTCSCRRGESCLHGEYIDWDSRGLKVHICPKPWF.

An N-terminal signal peptide occupies residues 1 to 18; it reads MMTRVFFAMFFLMALTEG. A propeptide spanning residues 19–49 is cleaved from the precursor; sequence WPRLYDSDCVRGRNMHITCFKDQTCGLTVKR. Trp-75 carries the post-translational modification 6'-bromotryptophan.

Belongs to the E superfamily. In terms of processing, contains 4 disulfide bonds. Expressed by the venom duct.

It localises to the secreted. This chain is Conotoxin Mr22.1, found in Conus marmoreus (Marble cone).